The primary structure comprises 609 residues: Isocitrate dehydrogenase kinase/phosphatase (609 aa).

Residues 325 to 331 (APGIKGM) and K346 each bind ATP. D381 is a catalytic residue.

The protein belongs to the AceK family.

The protein resides in the cytoplasm. It catalyses the reaction L-seryl-[isocitrate dehydrogenase] + ATP = O-phospho-L-seryl-[isocitrate dehydrogenase] + ADP + H(+). Its function is as follows. Bifunctional enzyme which can phosphorylate or dephosphorylate isocitrate dehydrogenase (IDH) on a specific serine residue. This is a regulatory mechanism which enables bacteria to bypass the Krebs cycle via the glyoxylate shunt in response to the source of carbon. When bacteria are grown on glucose, IDH is fully active and unphosphorylated, but when grown on acetate or ethanol, the activity of IDH declines drastically concomitant with its phosphorylation. This chain is Isocitrate dehydrogenase kinase/phosphatase, found in Acidovorax sp. (strain JS42).